Reading from the N-terminus, the 821-residue chain is Calpain-3 (821 aa).

The disordered stretch occupies residues 1–34 (MPTVISASMAPRTGASQVPRTMPQAAQGKGTEAG). The Calpain catalytic domain maps to 73–417 (LYLDPEFPPD…FTKLEICNLT (345 aa)). Active-site residues include C128, H334, and N358. Positions 418–586 (ADALESDKLQ…KRNLSEEVEN (169 aa)) are domain III. Residues 587-649 (TISVDRPVRK…EPSNTDQESE (63 aa)) form a linker region. The disordered stretch occupies residues 603–652 (IFVSDRANSNKELGVDQESEEGQDKTSPDKQEKSPKPEPSNTDQESEEQQ). Residues 624-638 (GQDKTSPDKQEKSPK) show a composition bias toward basic and acidic residues. The span at 641 to 652 (PSNTDQESEEQQ) shows a compositional bias: polar residues. EF-hand domains follow at residues 649 to 683 (EEQQ…VVNK), 692 to 725 (FTLE…KKIK), 722 to 757 (KKIK…AGFH), and 787 to 821 (VRLE…TMYA). The segment at 650–821 (EQQQFRNIFR…LEWLQLTMYA (172 aa)) is domain IV. 18 residues coordinate Ca(2+): A662, D665, E667, E672, D705, D707, S709, R711, E716, D735, D737, S739, T741, E746, D800, D802, D804, and I806.

This sequence belongs to the peptidase C2 family. As to quaternary structure, homodimer; via EF-hand domain 4. Interacts with TTN/titin. Interacts with CMYA5; this interaction, which results in CMYA5 proteolysis, may protect CAPN3 from autolysis. Interacts with SIMC1. Interacts with UTP25; the interaction is required for CAPN3 translocation to the nucleolus. In terms of tissue distribution, skeletal muscle.

The protein localises to the cytoplasm. It localises to the nucleus. The protein resides in the nucleolus. It carries out the reaction Broad endopeptidase activity.. With respect to regulation, activated by micromolar concentrations of calcium and inhibited by calpastatin. Its function is as follows. Calcium-regulated non-lysosomal thiol-protease. Proteolytically cleaves CTBP1. Mediates, with UTP25, the proteasome-independent degradation of p53/TP53. The sequence is that of Calpain-3 (CAPN3) from Sus scrofa (Pig).